The primary structure comprises 593 residues: NADH-quinone oxidoreductase subunit C/D (593 aa).

Positions 1 to 184 (MTADNAIFIP…DPYSLTLAKQ (184 aa)) are NADH dehydrogenase I subunit C. Residues 208 to 593 (DYMFLNLGPN…IDFVMADVDR (386 aa)) are NADH dehydrogenase I subunit D.

In the N-terminal section; belongs to the complex I 30 kDa subunit family. This sequence in the C-terminal section; belongs to the complex I 49 kDa subunit family. As to quaternary structure, NDH-1 is composed of 13 different subunits. Subunits NuoB, CD, E, F, and G constitute the peripheral sector of the complex.

It localises to the cell inner membrane. The catalysed reaction is a quinone + NADH + 5 H(+)(in) = a quinol + NAD(+) + 4 H(+)(out). In terms of biological role, NDH-1 shuttles electrons from NADH, via FMN and iron-sulfur (Fe-S) centers, to quinones in the respiratory chain. The immediate electron acceptor for the enzyme in this species is believed to be ubiquinone. Couples the redox reaction to proton translocation (for every two electrons transferred, four hydrogen ions are translocated across the cytoplasmic membrane), and thus conserves the redox energy in a proton gradient. This chain is NADH-quinone oxidoreductase subunit C/D, found in Pseudomonas putida (strain W619).